Consider the following 906-residue polypeptide: Protein translocase subunit SecA (906 aa).

Residues Gln86, 104 to 108, and Asp499 contribute to the ATP site; that span reads GEGKT. The segment at 862-885 is disordered; the sequence is KPVVSRIDPKDRNPDDPTSWGRVS. Zn(2+)-binding residues include Cys890, Cys892, Cys901, and His902.

Belongs to the SecA family. As to quaternary structure, monomer and homodimer. Part of the essential Sec protein translocation apparatus which comprises SecA, SecYEG and auxiliary proteins SecDF-YajC and YidC. Requires Zn(2+) as cofactor.

Its subcellular location is the cell inner membrane. It is found in the cytoplasm. The catalysed reaction is ATP + H2O + cellular proteinSide 1 = ADP + phosphate + cellular proteinSide 2.. Functionally, part of the Sec protein translocase complex. Interacts with the SecYEG preprotein conducting channel. Has a central role in coupling the hydrolysis of ATP to the transfer of proteins into and across the cell membrane, serving both as a receptor for the preprotein-SecB complex and as an ATP-driven molecular motor driving the stepwise translocation of polypeptide chains across the membrane. This is Protein translocase subunit SecA from Rickettsia massiliae (strain Mtu5).